Reading from the N-terminus, the 209-residue chain is Outer-membrane lipoprotein carrier protein (209 aa).

An N-terminal signal peptide occupies residues 1 to 21 (MHRQLRYAVLATALFASTAFA).

The protein belongs to the LolA family. Monomer.

Its subcellular location is the periplasm. Functionally, participates in the translocation of lipoproteins from the inner membrane to the outer membrane. Only forms a complex with a lipoprotein if the residue after the N-terminal Cys is not an aspartate (The Asp acts as a targeting signal to indicate that the lipoprotein should stay in the inner membrane). The sequence is that of Outer-membrane lipoprotein carrier protein from Xanthomonas oryzae pv. oryzae (strain MAFF 311018).